Here is a 387-residue protein sequence, read N- to C-terminus: Acyltransferase MdmB (387 aa).

10 helical membrane-spanning segments follow: residues 8-28 (LPSLTGLRWFAALAVFACHIA), 45-65 (ITTLGSIAVSVFFLLSGFVLA), 85-105 (IYPLHLVTFLIAGVIIFSLAE), 139-161 (TPSWSLSCEFAFYLTFPLWYRLV), 170-190 (WWCAAGIAAAVICVPFVTSQF), 209-229 (CWLPPVRMLEFVLGIVMALIL), 236-256 (GPGVVSSALLLAAAYGVTQVV), 258-278 (PMFTIAACSIVPAALLITALA), 292-312 (AVLVRLGEWSFAFYLVHFMVI), and 336-356 (ALALAMLAVAIVAGGLLHTVV).

It belongs to the acyltransferase 3 family.

It is found in the cell membrane. Functionally, catalyzes the acylation of the mycaminose sugar during midecamycin biosynthesis. The sequence is that of Acyltransferase MdmB (mdmB) from Streptomyces mycarofaciens.